A 321-amino-acid polypeptide reads, in one-letter code: tRNA pseudouridine synthase B (321 aa).

The Nucleophile role is filled by aspartate 47.

It belongs to the pseudouridine synthase TruB family. Type 1 subfamily.

The enzyme catalyses uridine(55) in tRNA = pseudouridine(55) in tRNA. Responsible for synthesis of pseudouridine from uracil-55 in the psi GC loop of transfer RNAs. The sequence is that of tRNA pseudouridine synthase B from Shewanella baltica (strain OS223).